Consider the following 283-residue polypeptide: Pantothenate synthetase (283 aa).

30–37 contributes to the ATP binding site; sequence MGNLHAGH. The Proton donor role is filled by H37. Residue Q61 coordinates (R)-pantoate. Q61 contributes to the beta-alanine binding site. Position 149–152 (149–152) interacts with ATP; that stretch reads GEKD. (R)-pantoate is bound at residue Q155. ATP-binding positions include V178 and 186-189; that span reads LSSR.

It belongs to the pantothenate synthetase family. Homodimer.

It is found in the cytoplasm. It carries out the reaction (R)-pantoate + beta-alanine + ATP = (R)-pantothenate + AMP + diphosphate + H(+). It participates in cofactor biosynthesis; (R)-pantothenate biosynthesis; (R)-pantothenate from (R)-pantoate and beta-alanine: step 1/1. Its function is as follows. Catalyzes the condensation of pantoate with beta-alanine in an ATP-dependent reaction via a pantoyl-adenylate intermediate. The chain is Pantothenate synthetase from Pseudomonas paraeruginosa (strain DSM 24068 / PA7) (Pseudomonas aeruginosa (strain PA7)).